We begin with the raw amino-acid sequence, 500 residues long: Chromosomal replication initiator protein DnaA (500 aa).

Residues 1–81 (MVNASGDPVI…LQALRTVTGE (81 aa)) form a domain I, interacts with DnaA modulators region. The domain II stretch occupies residues 81 to 155 (ENMFPAFKVV…QQKMNRDPET (75 aa)). The tract at residues 156 to 377 (HLNKNFTFDS…GALTRVTAVA (222 aa)) is domain III, AAA+ region. ATP-binding residues include G200, G202, K203, and T204. Positions 378 to 500 (SLSNQPVTRA…TVRLKQSNTN (123 aa)) are domain IV, binds dsDNA.

Belongs to the DnaA family. Oligomerizes as a right-handed, spiral filament on DNA at oriC.

The protein localises to the cytoplasm. In terms of biological role, plays an essential role in the initiation and regulation of chromosomal replication. ATP-DnaA binds to the origin of replication (oriC) to initiate formation of the DNA replication initiation complex once per cell cycle. Binds the DnaA box (a 9 base pair repeat at the origin) and separates the double-stranded (ds)DNA. Forms a right-handed helical filament on oriC DNA; dsDNA binds to the exterior of the filament while single-stranded (ss)DNA is stabiized in the filament's interior. The ATP-DnaA-oriC complex binds and stabilizes one strand of the AT-rich DNA unwinding element (DUE), permitting loading of DNA polymerase. After initiation quickly degrades to an ADP-DnaA complex that is not apt for DNA replication. Binds acidic phospholipids. The chain is Chromosomal replication initiator protein DnaA from Bifidobacterium longum subsp. infantis (strain ATCC 15697 / DSM 20088 / JCM 1222 / NCTC 11817 / S12).